Consider the following 369-residue polypeptide: DNA replication and repair protein RecF (369 aa).

30–37 serves as a coordination point for ATP; that stretch reads GENAQGKT.

Belongs to the RecF family.

Its subcellular location is the cytoplasm. Functionally, the RecF protein is involved in DNA metabolism; it is required for DNA replication and normal SOS inducibility. RecF binds preferentially to single-stranded, linear DNA. It also seems to bind ATP. This Oceanobacillus iheyensis (strain DSM 14371 / CIP 107618 / JCM 11309 / KCTC 3954 / HTE831) protein is DNA replication and repair protein RecF.